Consider the following 125-residue polypeptide: Histone H1-like protein HC1 (125 aa).

The protein belongs to the histone H1/H5 family. HCT subfamily.

Functionally, might have a role analogous to that of eukaryotic histone proteins. This is Histone H1-like protein HC1 (hctA) from Chlamydia muridarum (strain MoPn / Nigg).